A 335-amino-acid chain; its full sequence is Acetyl-coenzyme A carboxylase carboxyl transferase subunit alpha (335 aa).

The CoA carboxyltransferase C-terminal domain maps to 40-294; that stretch reads QLETLATRRR…KGAIEKHLNE (255 aa).

It belongs to the AccA family. As to quaternary structure, acetyl-CoA carboxylase is a heterohexamer composed of biotin carboxyl carrier protein (AccB), biotin carboxylase (AccC) and two subunits each of ACCase subunit alpha (AccA) and ACCase subunit beta (AccD).

It localises to the cytoplasm. It catalyses the reaction N(6)-carboxybiotinyl-L-lysyl-[protein] + acetyl-CoA = N(6)-biotinyl-L-lysyl-[protein] + malonyl-CoA. Its pathway is lipid metabolism; malonyl-CoA biosynthesis; malonyl-CoA from acetyl-CoA: step 1/1. Component of the acetyl coenzyme A carboxylase (ACC) complex. First, biotin carboxylase catalyzes the carboxylation of biotin on its carrier protein (BCCP) and then the CO(2) group is transferred by the carboxyltransferase to acetyl-CoA to form malonyl-CoA. This Prochlorococcus marinus subsp. pastoris (strain CCMP1986 / NIES-2087 / MED4) protein is Acetyl-coenzyme A carboxylase carboxyl transferase subunit alpha.